Consider the following 511-residue polypeptide: MSGHNILTQLESIDVLDLPYVERDLNFAQLVSLSFLLYGDEHSTATYILQKLLVLARATASDWPHSDILSQYAKSKPQTWRKYLVEALCIIGARQVLRKLGLCWQELRMHYLPHVGSIRVHIHPLLKSLYTICEELTLAQRGRMVLDIKEKNSVGDPLRFYDAEYLEIFLLDWLTRRLIRLGDFNANGSDVQLLIEYFKFNDLHAQATLLVDTVNAYATSSCSPATPNVLLPMDGNGIANESSSPTAAASRPRAKNALQLSRENAGIALIINQQEFYRDANDDYKVYLPPIELPLRNGTDMDKQRLTNVFSMLGYKVEAHDNLDHLSMLHHIRQACKRSLLHESLVVCILSHGFEDAVYGANSVALRISDIENVLCSYENLYEKPKLVVIQACQQEDKENNALPYKINASTKSPCQYLNMLRAMSTVPGFPALRHTQTGSWFIQSLCDAIVEHSNSDHIADILTIVINNVANKRGNKNETMVPWTGGALRQHVYFPRTSATDKVVPDSPGL.

Residues 1 to 242 (MSGHNILTQL…MDGNGIANES (242 aa)) constitute a propeptide that is removed on maturation. Catalysis depends on residues His-352 and Cys-393. A propeptide spanning residues 406–415 (KINASTKSPC) is cleaved from the precursor.

Belongs to the peptidase C14A family. Heterotetramer that consists of two anti-parallel arranged heterodimers, each one formed by a 15 kDa (caspase-8 subunit p15) and a 10 kDa (caspase-8 subunit p10) subunit. Interacts with the N-terminus of Fadd.

Its subcellular location is the cytoplasm. It carries out the reaction Strict requirement for Asp at position P1 and has a preferred cleavage sequence of (Leu/Asp/Val)-Glu-Thr-Asp-|-(Gly/Ser/Ala).. In terms of biological role, effector of the programmed cell death (PCD) activators rpr, grim and W. May play an apoptotic role in the germline as well as soma. Role in immune response, required to resist Gram-negative bacterial infections by regulating DptA. Fadd interacts with Dredd, Fadd promotes cleavage of Dredd and is necessary and sufficient for enhancing Dredd-induced apoptosis. The polypeptide is Caspase-8 (Drosophila pseudoobscura pseudoobscura (Fruit fly)).